The chain runs to 373 residues: Asporin (373 aa).

The N-terminal stretch at 1 to 15 is a signal peptide; sequence MKEYVMLLLLAVCSA. The propeptide occupies 16 to 32; sequence KPFFSPSHTALKNMMLK. O-linked (GalNAc...) serine glycosylation is present at serine 48. The region spanning 59–95 is the LRRNT domain; the sequence is FFPFDLFPTCPFGCQCYSRVVHCSDLGLTSVPNNIPF. Disulfide bonds link cysteine 68–cysteine 74 and cysteine 72–cysteine 81. LRR repeat units lie at residues 96–117, 120–141, 144–166, 167–186, 189–212, 235–255, 259–280, 283–305, 306–327, 328–349, and 350–373; these read DTRMVDLQNNKIKEIKENDFKG, SLYALILNNNKLTKIHPKTFLT, KLRRLYLSHNQLSEIPLNLPKSL, AELRIHDNKVKKIQKDTFKG, ALHVLEMSANPLENNGIEPGAFEG, TLLELHLDFNKISTVELEDLK, ELQRLGLGNNRITDIENGTFAN, RVREIHLEHNKLKKIPSGLQELK, YLQIIFLHYNSIAKVGVNDFCP, TVPKMKKSLYSAISLFNNPMKY, and WEIQPATFRCVLGRMSVQLGNVGK. The interval 159–205 is interaction with TGFB1; it reads PLNLPKSLAELRIHDNKVKKIQKDTFKGMNALHVLEMSANPLENNGI. N-linked (GlcNAc...) asparagine glycosylation is present at asparagine 275. A disulfide bond links cysteine 326 and cysteine 359.

This sequence belongs to the small leucine-rich proteoglycan (SLRP) family. SLRP class I subfamily. As to quaternary structure, interacts with type I collagen. DCN can inhibit collagen binding. Interacts with TGFB1, TGFB2 and TGFB3. DCN, BGN, and FMOD inhibit binding to TGFB1. Interacts with BMP2. Interacts in vitro with type II collagen. In terms of tissue distribution, higher expression in heart, also detected in kidney, stomach, testes, and skin but only weakly in lung, skeletal muscle, small intestine, and thymus. Expressed specifically and predominantly in the periodontal ligament (PDL). During tooth development, strong expression is seen in the dental follicle, which is the progenitor tissue that forms cementum, alveolar bone, and the PDL. Expressed in the perichondria of the maxilla, mandible, vertebrae, and long bones. Predominantly expressed in the perichondrium/periosteum of long bones (at protein level).

It is found in the secreted. Its subcellular location is the extracellular space. The protein localises to the extracellular matrix. Binds calcium and plays a role in osteoblast-driven collagen biomineralization activity. Critical regulator of TGF-beta in articular cartilage and plays an essential role in cartilage homeostasis and osteoarthritis (OA) pathogenesis. Negatively regulates chondrogenesis in the articular cartilage by blocking the TGF-beta/receptor interaction on the cell surface and inhibiting the canonical TGF-beta/Smad signal. Negatively regulates periodontal ligament (PDL) differentiation and mineralization to ensure that the PDL is not ossified and to maintain homeostasis of the tooth-supporting system. Inhibits BMP2-induced cytodifferentiation of PDL cells by preventing its binding to BMPR1B/BMP type-1B receptor, resulting in inhibition of BMP-dependent activation of SMAD proteins. Inhibits the interaction between TGFB1 and TGF-beta receptor type II in the presence of heparin/heparan sulfate in vitro. In Mus musculus (Mouse), this protein is Asporin (Aspn).